The sequence spans 250 residues: uncharacterized protein (250 aa).

It to Synechocystis PCC 6803 sll0249.

This is an uncharacterized protein from Nostoc sp. (strain PCC 7120 / SAG 25.82 / UTEX 2576).